We begin with the raw amino-acid sequence, 83 residues long: Kunitz-type serine protease inhibitor homolog beta-bungarotoxin B chain (83 aa).

The first 24 residues, 1–24 (MSSGSLLLLLGLLTLLAELTPVSS), serve as a signal peptide directing secretion. Residues 31 to 81 (CDKPPNKKRCTGHIPAFYYNPQRKTCERFSYGGCKGNGNHFKTPQLCMCHC) form the BPTI/Kunitz inhibitor domain. 3 disulfide bridges follow: cysteine 31-cysteine 81, cysteine 40-cysteine 64, and cysteine 56-cysteine 77.

Belongs to the venom Kunitz-type family. In terms of assembly, heterodimer with beta-bungarotoxin A1 chain; disulfide-linked. The A chain has phospholipase A2 activity and the B chain shows homology with the basic protease inhibitors. In terms of tissue distribution, expressed by the venom gland.

The protein localises to the secreted. Beta-bungarotoxin is a presynaptic neurotoxin of the venom. The B chain is homologous to venom basic protease inhibitors but has no protease inhibitor activity and is non-toxic. The polypeptide is Kunitz-type serine protease inhibitor homolog beta-bungarotoxin B chain (Bungarus flaviceps flaviceps (Red-headed krait)).